Here is a 638-residue protein sequence, read N- to C-terminus: Stress-activated protein kinase alpha (638 aa).

ANK repeat units lie at residues 43-72 (YGQSALTIALKNNNEEMVELLLSLCVTLKA), 80-109 (NGFSALHQAVSSDDRILMRVLQYENINVDV), 113-146 (DLNTPIHYFCQKFRSPNCQEPFQLFIQKGVNVNA), 150-181 (NGETPLHKAIFNNSVRLMMVGLLLKNGANVNL), 185-214 (FQESPLHYAVRLGREDLVSVLLKAGADVDC), and 219-248 (ERKTPYQLAVEEGNKDMTARIKKYKDLFDW). Positions 240–303 (KKYKDLFDWL…LKETSNLANE (64 aa)) constitute an SAM domain. One can recognise a Protein kinase domain in the interval 351–620 (LEYTEKLGAG…RLVTIENEYR (270 aa)). ATP is bound by residues 357–365 (LGAGSSGKV) and Lys-378. The active-site Proton acceptor is Asp-472.

The protein belongs to the protein kinase superfamily. TKL Ser/Thr protein kinase family. Interacts with F-actin. Post-translationally, autophosphorylated.

The protein localises to the cytoplasm. Its subcellular location is the cytoskeleton. The catalysed reaction is L-seryl-[protein] + ATP = O-phospho-L-seryl-[protein] + ADP + H(+). It catalyses the reaction L-threonyl-[protein] + ATP = O-phospho-L-threonyl-[protein] + ADP + H(+). In terms of biological role, may be involved in cortical F-actin organization and resistance to osmotic stress. Activated upon cell detachment, in vitro. This chain is Stress-activated protein kinase alpha (spkA-1), found in Dictyostelium discoideum (Social amoeba).